The following is a 321-amino-acid chain: uncharacterized protein (321 aa).

This is an uncharacterized protein from Archaeoglobus fulgidus (strain ATCC 49558 / DSM 4304 / JCM 9628 / NBRC 100126 / VC-16).